The primary structure comprises 370 residues: Muconate cycloisomerase 1 (370 aa).

Lys166 is a catalytic residue. Asp195, Glu221, and Asp246 together coordinate Mn(2+).

Belongs to the mandelate racemase/muconate lactonizing enzyme family. As to quaternary structure, homooctamer. The cofactor is Mn(2+).

The enzyme catalyses (S)-muconolactone = cis,cis-muconate + H(+). It functions in the pathway aromatic compound metabolism; beta-ketoadipate pathway; 5-oxo-4,5-dihydro-2-furylacetate from catechol: step 2/3. Its function is as follows. Catalyzes a syn cycloisomerization. In Acinetobacter baylyi (strain ATCC 33305 / BD413 / ADP1), this protein is Muconate cycloisomerase 1 (catB).